A 169-amino-acid chain; its full sequence is NADH-quinone oxidoreductase subunit I (169 aa).

2 4Fe-4S ferredoxin-type domains span residues 60–90 (LRRYPNGEERCIACKLCEVICPAQAIVIEAE) and 100–129 (TRYDIDMIKCIYCGLCQEACPVDAIVEGPN). Residues C70, C73, C76, C80, C109, C112, C115, and C119 each contribute to the [4Fe-4S] cluster site.

Belongs to the complex I 23 kDa subunit family. As to quaternary structure, NDH-1 is composed of 14 different subunits. Subunits NuoA, H, J, K, L, M, N constitute the membrane sector of the complex. Requires [4Fe-4S] cluster as cofactor.

The protein localises to the cell membrane. The catalysed reaction is a quinone + NADH + 5 H(+)(in) = a quinol + NAD(+) + 4 H(+)(out). Its function is as follows. NDH-1 shuttles electrons from NADH, via FMN and iron-sulfur (Fe-S) centers, to quinones in the respiratory chain. The immediate electron acceptor for the enzyme in this species is believed to be ubiquinone. Couples the redox reaction to proton translocation (for every two electrons transferred, four hydrogen ions are translocated across the cytoplasmic membrane), and thus conserves the redox energy in a proton gradient. This Wolbachia pipientis wMel protein is NADH-quinone oxidoreductase subunit I.